We begin with the raw amino-acid sequence, 68 residues long: Large ribosomal subunit protein bL35 (68 aa).

Belongs to the bacterial ribosomal protein bL35 family.

The chain is Large ribosomal subunit protein bL35 from Wolbachia pipientis subsp. Culex pipiens (strain wPip).